The primary structure comprises 326 residues: Glycerol-3-phosphate dehydrogenase [NAD(P)+] (326 aa).

Tryptophan 16, arginine 36, arginine 37, and lysine 106 together coordinate NADPH. Lysine 106 and glycine 132 together coordinate sn-glycerol 3-phosphate. An NADPH-binding site is contributed by alanine 136. Sn-glycerol 3-phosphate contacts are provided by lysine 187, aspartate 240, serine 250, arginine 251, and asparagine 252. Catalysis depends on lysine 187, which acts as the Proton acceptor. NADPH is bound at residue arginine 251. Valine 271 and glutamate 273 together coordinate NADPH.

This sequence belongs to the NAD-dependent glycerol-3-phosphate dehydrogenase family.

It localises to the cytoplasm. It carries out the reaction sn-glycerol 3-phosphate + NAD(+) = dihydroxyacetone phosphate + NADH + H(+). The enzyme catalyses sn-glycerol 3-phosphate + NADP(+) = dihydroxyacetone phosphate + NADPH + H(+). The protein operates within membrane lipid metabolism; glycerophospholipid metabolism. Catalyzes the reduction of the glycolytic intermediate dihydroxyacetone phosphate (DHAP) to sn-glycerol 3-phosphate (G3P), the key precursor for phospholipid synthesis. This chain is Glycerol-3-phosphate dehydrogenase [NAD(P)+], found in Deinococcus geothermalis (strain DSM 11300 / CIP 105573 / AG-3a).